The primary structure comprises 498 residues: ATP synthase subunit beta, chloroplastic (498 aa).

Residue 172-179 participates in ATP binding; the sequence is GGAGVGKT.

The protein belongs to the ATPase alpha/beta chains family. F-type ATPases have 2 components, CF(1) - the catalytic core - and CF(0) - the membrane proton channel. CF(1) has five subunits: alpha(3), beta(3), gamma(1), delta(1), epsilon(1). CF(0) has four main subunits: a(1), b(1), b'(1) and c(9-12).

Its subcellular location is the plastid. The protein localises to the chloroplast thylakoid membrane. It carries out the reaction ATP + H2O + 4 H(+)(in) = ADP + phosphate + 5 H(+)(out). Produces ATP from ADP in the presence of a proton gradient across the membrane. The catalytic sites are hosted primarily by the beta subunits. The chain is ATP synthase subunit beta, chloroplastic from Hyophorbe lagenicaulis (Bottle palm).